Consider the following 394-residue polypeptide: Flap endonuclease 1 (394 aa).

An N-domain region spans residues 1–103; sequence MGIKSLYQII…GELAKRTMRK (103 aa). Asp-34 lines the Mg(2+) pocket. Arg-69 contacts DNA. Position 85 (Asp-85) interacts with Mg(2+). The disordered stretch occupies residues 102 to 123; it reads RKAEAQEAAEEAKETGTAEDVE. An I-domain region spans residues 121–252; that stretch reads DVEKFSRRTV…NTALKMIRDH (132 aa). The Mg(2+) site is built by Glu-157, Glu-159, Asp-178, and Asp-180. Glu-157 serves as a coordination point for DNA. DNA is bound by residues Gly-230 and Asp-232. Asp-232 is a Mg(2+) binding site. The interaction with PCNA stretch occupies residues 340-348; the sequence is QQSRLEGFF. The tract at residues 349 to 394 is disordered; that stretch reads KPVAKTEQQKATAKRKAEEKAELAKKKKKEDAKAKRAMGAKPRGAR. Residues 363–382 are compositionally biased toward basic and acidic residues; that stretch reads RKAEEKAELAKKKKKEDAKA. Residues 383-394 are compositionally biased toward basic residues; that stretch reads KRAMGAKPRGAR.

The protein belongs to the XPG/RAD2 endonuclease family. FEN1 subfamily. As to quaternary structure, interacts with PCNA. Three molecules of FEN1 bind to one PCNA trimer with each molecule binding to one PCNA monomer. PCNA stimulates the nuclease activity without altering cleavage specificity. Mg(2+) serves as cofactor. Phosphorylated. Phosphorylation upon DNA damage induces relocalization to the nuclear plasma.

The protein localises to the nucleus. Its subcellular location is the nucleolus. It is found in the nucleoplasm. The protein resides in the mitochondrion. Its function is as follows. Structure-specific nuclease with 5'-flap endonuclease and 5'-3' exonuclease activities involved in DNA replication and repair. During DNA replication, cleaves the 5'-overhanging flap structure that is generated by displacement synthesis when DNA polymerase encounters the 5'-end of a downstream Okazaki fragment. It enters the flap from the 5'-end and then tracks to cleave the flap base, leaving a nick for ligation. Also involved in the long patch base excision repair (LP-BER) pathway, by cleaving within the apurinic/apyrimidinic (AP) site-terminated flap. Acts as a genome stabilization factor that prevents flaps from equilibrating into structures that lead to duplications and deletions. Also possesses 5'-3' exonuclease activity on nicked or gapped double-stranded DNA, and exhibits RNase H activity. Also involved in replication and repair of rDNA and in repairing mitochondrial DNA. The chain is Flap endonuclease 1 from Arthroderma otae (strain ATCC MYA-4605 / CBS 113480) (Microsporum canis).